Consider the following 82-residue polypeptide: MVTIRLARHGAKKRPFYQVVVADSRNARNGRFIERVGFFNPIASEKEEGTRLDLDRIAHWVGQGATISDRVAALIKEVNKAA.

Belongs to the bacterial ribosomal protein bS16 family.

In Shigella boydii serotype 18 (strain CDC 3083-94 / BS512), this protein is Small ribosomal subunit protein bS16.